We begin with the raw amino-acid sequence, 316 residues long: tRNA-cytidine(32) 2-sulfurtransferase (316 aa).

Positions 1–31 (MGAVIDDSMPGPGADATGTGPSDARTERETR) are disordered. The span at 10-21 (PGPGADATGTGP) shows a compositional bias: low complexity. The PP-loop motif motif lies at 62–67 (SGGKDS). C137, C140, and C228 together coordinate [4Fe-4S] cluster.

It belongs to the TtcA family. Homodimer. Mg(2+) serves as cofactor. [4Fe-4S] cluster is required as a cofactor.

The protein resides in the cytoplasm. It carries out the reaction cytidine(32) in tRNA + S-sulfanyl-L-cysteinyl-[cysteine desulfurase] + AH2 + ATP = 2-thiocytidine(32) in tRNA + L-cysteinyl-[cysteine desulfurase] + A + AMP + diphosphate + H(+). It functions in the pathway tRNA modification. Catalyzes the ATP-dependent 2-thiolation of cytidine in position 32 of tRNA, to form 2-thiocytidine (s(2)C32). The sulfur atoms are provided by the cysteine/cysteine desulfurase (IscS) system. The sequence is that of tRNA-cytidine(32) 2-sulfurtransferase from Verminephrobacter eiseniae (strain EF01-2).